Consider the following 527-residue polypeptide: 4-alpha-glucanotransferase (527 aa).

It belongs to the disproportionating enzyme family.

The protein resides in the cytoplasm. The catalysed reaction is Transfers a segment of a (1-&gt;4)-alpha-D-glucan to a new position in an acceptor, which may be glucose or a (1-&gt;4)-alpha-D-glucan.. In Chlamydia muridarum (strain MoPn / Nigg), this protein is 4-alpha-glucanotransferase (malQ).